Reading from the N-terminus, the 71-residue chain is uncharacterized protein (71 aa).

The first 21 residues, 1–21, serve as a signal peptide directing secretion; the sequence is MGVGLHGDHVGGELNSANAFT.

This is an uncharacterized protein from Haemophilus influenzae (strain ATCC 51907 / DSM 11121 / KW20 / Rd).